Reading from the N-terminus, the 339-residue chain is Protein-glutamate methylesterase/protein-glutamine glutaminase 3 (339 aa).

The Response regulatory domain occupies 2 to 119 (NIGIVNDLPL…GLSTDASPQA (118 aa)). D53 is subject to 4-aspartylphosphate. A CheB-type methylesterase domain is found at 141–336 (PGPAPTRGQP…PQLIARIALT (196 aa)). Active-site residues include S158, H185, and D278.

It belongs to the CheB family. Post-translationally, phosphorylated by CheA. Phosphorylation of the N-terminal regulatory domain activates the methylesterase activity.

It localises to the cytoplasm. It catalyses the reaction [protein]-L-glutamate 5-O-methyl ester + H2O = L-glutamyl-[protein] + methanol + H(+). The catalysed reaction is L-glutaminyl-[protein] + H2O = L-glutamyl-[protein] + NH4(+). In terms of biological role, involved in chemotaxis. Part of a chemotaxis signal transduction system that modulates chemotaxis in response to various stimuli. Catalyzes the demethylation of specific methylglutamate residues introduced into the chemoreceptors (methyl-accepting chemotaxis proteins or MCP) by CheR. Also mediates the irreversible deamidation of specific glutamine residues to glutamic acid. The chain is Protein-glutamate methylesterase/protein-glutamine glutaminase 3 from Burkholderia orbicola (strain AU 1054).